The chain runs to 609 residues: Glutamine--fructose-6-phosphate aminotransferase [isomerizing] (609 aa).

The active-site Nucleophile; for GATase activity is the Cys-2. Residues 2-217 (CGIVGAIAGR…DGDTAEIRRD (216 aa)) enclose the Glutamine amidotransferase type-2 domain. SIS domains lie at 285 to 425 (AESV…LRGA) and 458 to 599 (WAEC…VDKP). The For Fru-6P isomerization activity role is filled by Lys-604.

In terms of assembly, homodimer.

The protein localises to the cytoplasm. The catalysed reaction is D-fructose 6-phosphate + L-glutamine = D-glucosamine 6-phosphate + L-glutamate. In terms of biological role, catalyzes the first step in hexosamine metabolism, converting fructose-6P into glucosamine-6P using glutamine as a nitrogen source. In Xylella fastidiosa (strain 9a5c), this protein is Glutamine--fructose-6-phosphate aminotransferase [isomerizing].